A 449-amino-acid polypeptide reads, in one-letter code: Putative glycosyltransferase 7 (449 aa).

The Cytoplasmic portion of the chain corresponds to 1 to 32 (MVSPETSSSHYQSSPMAKYAGTRTRPVVCISD). The helical; Signal-anchor for type II membrane protein transmembrane segment at 33-53 (VVLFLGGAFMSLILVWSFFSF) threads the bilayer. Topologically, residues 54–449 (SSISPNLTVK…VPFDYPDEPW (396 aa)) are lumenal. Residues N59, N123, and N332 are each glycosylated (N-linked (GlcNAc...) asparagine).

It belongs to the glycosyltransferase 34 family.

The protein localises to the golgi apparatus membrane. Functionally, probable glycosyltransferase that may be involved in the biosynthesis of xyloglucan. The protein is Putative glycosyltransferase 7 (GT7) of Arabidopsis thaliana (Mouse-ear cress).